The sequence spans 829 residues: Transmembrane protease serine 7 (829 aa).

Over 1–62 (MDKEKSDPSC…RAPFWNVQNK (62 aa)) the chain is Cytoplasmic. Positions 26 to 52 (SVPGKLPGRRPPRKPIGKPRPRKQPKK) are disordered. Residues 32–52 (PGRRPPRKPIGKPRPRKQPKK) are compositionally biased toward basic residues. The helical; Signal-anchor for type II membrane protein transmembrane segment at 63 to 83 (IILFTVFLFILAVTAWTLLWL) threads the bilayer. At 84–829 (YISKTESKDA…WIHKYVPSLL (746 aa)) the chain is on the extracellular side. The SEA domain occupies 92–220 (DAFYFVGMFR…DSVVLNAGLR (129 aa)). Intrachain disulfides connect Cys-233–Cys-259, Cys-285–Cys-308, and Cys-351–Cys-382. CUB domains lie at 233-346 (CSRY…FEVI) and 351-467 (CEST…YNIS). Asn-401 and Asn-465 each carry an N-linked (GlcNAc...) asparagine glycan. LDL-receptor class A domains lie at 469–505 (PCPA…LFCV), 503–540 (FCVT…QNCT), and 544–581 (PCTS…EGCG). Disulfide bonds link Cys-470–Cys-482, Cys-477–Cys-495, Cys-489–Cys-504, Cys-511–Cys-530, Cys-524–Cys-539, Cys-545–Cys-557, Cys-552–Cys-571, Cys-565–Cys-580, and Cys-617–Cys-633. Residues 592–826 (IVGGSDSQEG…FVPWIHKYVP (235 aa)) enclose the Peptidase S1 domain. Catalysis depends on charge relay system residues His-632 and Asp-680. Disulfide bonds link Cys-716–Cys-782, Cys-748–Cys-761, and Cys-772–Cys-802. Ser-776 acts as the Charge relay system in catalysis.

It belongs to the peptidase S1 family. As to quaternary structure, forms a heterodimer with SERPINA5. N-glycosylated. As to expression, expressed in brain, eye, testis, skin, epididymis and salivary gland with lower levels in heart, skeletal muscle, thymus, ovary, prostate and uterus.

The protein resides in the cell membrane. Serine protease which preferentially hydrolyzes peptides with Arg at the P1 position. The polypeptide is Transmembrane protease serine 7 (Tmprss7) (Mus musculus (Mouse)).